A 423-amino-acid polypeptide reads, in one-letter code: Probable peptidoglycan glycosyltransferase FtsW (423 aa).

Residues 1 to 53 (MNLKEKLFPENRLGLNRFWNFSRGGIDNFRTGLRDAVSGVEQTRSRMMEYDQL) lie on the Cytoplasmic side of the membrane. The helical transmembrane segment at 54–74 (LVWAILSLMLIGLVMVYSASI) threads the bilayer. Residues 75 to 88 (TLADGPKYANYSSN) lie on the Periplasmic side of the membrane. The chain crosses the membrane as a helical span at residues 89–109 (FFLIRHMISLAIAIGVGIWAF). Topologically, residues 110–119 (KIPTKVWDRY) are cytoplasmic. A helical transmembrane segment spans residues 120–140 (SPVIFGITVLLLIAVLIPGVG). The Periplasmic segment spans residues 141 to 149 (RGVNGAKRW). Residues 150-170 (IPLGLMNFQSSELMKFAAVIF) traverse the membrane as a helical segment. Residues 171 to 184 (AASYTVQRQEYLHS) lie on the Cytoplasmic side of the membrane. A helical transmembrane segment spans residues 185-205 (FVKGMLPMGIAVALVGGLLMA). Residues 206 to 208 (EPD) lie on the Periplasmic side of the membrane. The helical transmembrane segment at 209–229 (MGAFVVVALIAFGILFLGGIN) threads the bilayer. Residues 230–231 (AK) lie on the Cytoplasmic side of the membrane. Residues 232–252 (LFGGLIAVGLMSGATMIAFSP) traverse the membrane as a helical segment. The Periplasmic portion of the chain corresponds to 253 to 310 (LRRGRMLAFMDPWQVDNAANKGYQLTHSLMAFGRGEWFGTGLGGSVEKLHYLPEAHTD). The helical transmembrane segment at 311-331 (FIMAVIGEELGFVGVVVMIFL) threads the bilayer. At 332–359 (FYWIVRRAFLIGRTALQLDRSFAGLAAK) the chain is on the cytoplasmic side. A helical transmembrane segment spans residues 360-380 (GVAIWIGWQAFINMGVNLGLL). The Periplasmic segment spans residues 381–386 (PTKGLT). The helical transmembrane segment at 387-407 (LPLVSYGGSGILMNAVAMAML) threads the bilayer. Residues 408–423 (LRIDFENRILMRGGKL) are Cytoplasmic-facing.

The protein belongs to the SEDS family. FtsW subfamily.

The protein localises to the cell inner membrane. It catalyses the reaction [GlcNAc-(1-&gt;4)-Mur2Ac(oyl-L-Ala-gamma-D-Glu-L-Lys-D-Ala-D-Ala)](n)-di-trans,octa-cis-undecaprenyl diphosphate + beta-D-GlcNAc-(1-&gt;4)-Mur2Ac(oyl-L-Ala-gamma-D-Glu-L-Lys-D-Ala-D-Ala)-di-trans,octa-cis-undecaprenyl diphosphate = [GlcNAc-(1-&gt;4)-Mur2Ac(oyl-L-Ala-gamma-D-Glu-L-Lys-D-Ala-D-Ala)](n+1)-di-trans,octa-cis-undecaprenyl diphosphate + di-trans,octa-cis-undecaprenyl diphosphate + H(+). The protein operates within cell wall biogenesis; peptidoglycan biosynthesis. In terms of biological role, peptidoglycan polymerase that is essential for cell division. This chain is Probable peptidoglycan glycosyltransferase FtsW, found in Polynucleobacter necessarius subsp. necessarius (strain STIR1).